Consider the following 379-residue polypeptide: Alcohol dehydrogenase class-2 isozyme 1 (379 aa).

Zn(2+) is bound by residues Cys-47, His-69, Cys-99, Cys-102, Cys-105, Cys-113, and Cys-176. Residues 205–210 (GLGGVG), Asp-229, Lys-234, 298–300 (VGV), and Arg-374 contribute to the NAD(+) site.

The protein belongs to the zinc-containing alcohol dehydrogenase family. Class-II subfamily. In terms of assembly, homodimer. The cofactor is Zn(2+).

It localises to the cytoplasm. The catalysed reaction is a primary alcohol + NAD(+) = an aldehyde + NADH + H(+). The enzyme catalyses a secondary alcohol + NAD(+) = a ketone + NADH + H(+). This chain is Alcohol dehydrogenase class-2 isozyme 1 (ADH2-1), found in Oryctolagus cuniculus (Rabbit).